A 423-amino-acid polypeptide reads, in one-letter code: Cyclin-dependent kinase 14 (423 aa).

Residues serine 32, serine 49, and serine 88 each carry the phosphoserine modification. The span at 49–64 shows a compositional bias: polar residues; the sequence is SENNACINFKTSSTGK. Positions 49–87 are disordered; that stretch reads SENNACINFKTSSTGKESPKVRRHSSPSSPTSPKFGKAD. A Protein kinase domain is found at 89-373; that stretch reads YEKLEKLGEG…AQAALSHEYF (285 aa). ATP-binding positions include 95–103 and lysine 118; that span reads LGEGSYATV. The Proton acceptor role is filled by aspartate 210. Residues 403–423 form a disordered region; it reads ESMRAFGKNNSYGKSLSNSKH. Positions 410 to 423 are enriched in polar residues; the sequence is KNNSYGKSLSNSKH.

Belongs to the protein kinase superfamily. CMGC Ser/Thr protein kinase family. CDC2/CDKX subfamily. In terms of assembly, found in a complex with LRP6, CCNY and CAPRIN2 during G2/M stage; CAPRIN2 functions as a scaffold for the complex by binding to CCNY via its N terminus and to CDK14 via its C terminus. Interacts with CCNY; CCNY mediates its recruitment to the plasma membrane and promotes phosphorylation of LRP6. Interacts with CCDN3 and CDKN1A. Interacts with SEPT8. Interacts with 14-3-3 proteina YWHAB, YWHAE, YWHAH and YWHAQ.

The protein localises to the cell membrane. Its subcellular location is the cytoplasm. It localises to the nucleus. It carries out the reaction L-seryl-[protein] + ATP = O-phospho-L-seryl-[protein] + ADP + H(+). The catalysed reaction is L-threonyl-[protein] + ATP = O-phospho-L-threonyl-[protein] + ADP + H(+). Its activity is regulated as follows. Serine/threonine-protein kinase activity is promoted by associated cyclins CCDN3 and CCNY and repressed by CDKN1A. Its function is as follows. Serine/threonine-protein kinase involved in the control of the eukaryotic cell cycle, whose activity is controlled by an associated cyclin. Acts as a cell-cycle regulator of Wnt signaling pathway during G2/M phase by mediating the phosphorylation of LRP6 at 'Ser-1490', leading to the activation of the Wnt signaling pathway. Acts as a regulator of cell cycle progression and cell proliferation via its interaction with CCDN3. Phosphorylates RB1 in vitro, however the relevance of such result remains to be confirmed in vivo. May also play a role in meiosis, neuron differentiation and may indirectly act as a negative regulator of insulin-responsive glucose transport. In Callithrix jacchus (White-tufted-ear marmoset), this protein is Cyclin-dependent kinase 14 (CDK14).